Here is an 861-residue protein sequence, read N- to C-terminus: Xylan 1,4-beta-xylosidase (861 aa).

Positions M1 to A19 are cleaved as a signal peptide. The Nucleophile role is filled by D269. The PA14 domain maps to D458–K600. Residue E616 is the Proton donor/acceptor of the active site.

Belongs to the glycosyl hydrolase 3 family. In terms of assembly, exists as a large polymeric species, presumably as a homononamer.

It catalyses the reaction Hydrolysis of (1-&gt;4)-beta-D-xylans, to remove successive D-xylose residues from the non-reducing termini.. The enzyme catalyses Hydrolysis of terminal non-reducing alpha-L-arabinofuranoside residues in alpha-L-arabinosides.. Its pathway is glycan degradation; xylan degradation. Involved in degradation of plant cell wall polysaccharides. Has beta-xylosidase activity via its capacity to hydrolyze glycosidic linkages of beta-1,4-xylo-oligosaccharides of various lengths (X2 to X6), releasing xylose monomers. To a much lesser extent, also has alpha-L-arabinofuranosidase activity. Does not possess beta-D-glucosidase activity. Acts synergistically with Xyn10D-Fae1A to increase the release of xylose from xylan. This Xylanibacter ruminicola (strain ATCC 19189 / DSM 19721 / CIP 105475 / JCM 8958 / 23) (Prevotella ruminicola) protein is Xylan 1,4-beta-xylosidase.